Here is a 157-residue protein sequence, read N- to C-terminus: MSRRNTAKKTKRADKFDPIYQNRLVNMVLNRIIKHGKKSLAYRILYRAMKQIQQKTEKNPLLVLRKAIKEVTPRLIVKSRRKSGSTYQVPFEIKPNRGKILAIRWLLKASRKRLGPNMESKLSYELIDATKGKGKAIRKKEEIHKMAEANRAFADYL.

The protein belongs to the universal ribosomal protein uS7 family. In terms of assembly, part of the 30S ribosomal subunit.

It is found in the plastid. Its subcellular location is the chloroplast. In terms of biological role, one of the primary rRNA binding proteins, it binds directly to 16S rRNA where it nucleates assembly of the head domain of the 30S subunit. This is Small ribosomal subunit protein uS7cz/uS7cy (rps7-A) from Gnetum parvifolium (Small-leaved jointfir).